The sequence spans 197 residues: Probable 26S proteasome non-ATPase regulatory subunit 9 (197 aa).

One can recognise a PDZ domain in the interval 75–166 (KIVVEMENEN…KIIRVTVIRE (92 aa)).

Belongs to the proteasome subunit p27 family.

Functionally, acts as a chaperone during the assembly of the 26S proteasome, specifically of the base subcomplex of the 19S regulatory complex (RC). The polypeptide is Probable 26S proteasome non-ATPase regulatory subunit 9 (psmd-9) (Caenorhabditis elegans).